The following is a 162-amino-acid chain: 2-C-methyl-D-erythritol 2,4-cyclodiphosphate synthase (162 aa).

Positions 12 and 14 each coordinate a divalent metal cation. Residues 12 to 14 (DVH) and 38 to 39 (HS) each bind 4-CDP-2-C-methyl-D-erythritol 2-phosphate. Position 46 (histidine 46) interacts with a divalent metal cation. Residues 60 to 62 (DIG), 65 to 69 (FPDTD), and arginine 146 each bind 4-CDP-2-C-methyl-D-erythritol 2-phosphate.

Belongs to the IspF family. Homotrimer. Requires a divalent metal cation as cofactor.

It catalyses the reaction 4-CDP-2-C-methyl-D-erythritol 2-phosphate = 2-C-methyl-D-erythritol 2,4-cyclic diphosphate + CMP. It participates in isoprenoid biosynthesis; isopentenyl diphosphate biosynthesis via DXP pathway; isopentenyl diphosphate from 1-deoxy-D-xylulose 5-phosphate: step 4/6. Involved in the biosynthesis of isopentenyl diphosphate (IPP) and dimethylallyl diphosphate (DMAPP), two major building blocks of isoprenoid compounds. Catalyzes the conversion of 4-diphosphocytidyl-2-C-methyl-D-erythritol 2-phosphate (CDP-ME2P) to 2-C-methyl-D-erythritol 2,4-cyclodiphosphate (ME-CPP) with a corresponding release of cytidine 5-monophosphate (CMP). The polypeptide is 2-C-methyl-D-erythritol 2,4-cyclodiphosphate synthase (Bordetella petrii (strain ATCC BAA-461 / DSM 12804 / CCUG 43448)).